The sequence spans 205 residues: GTP cyclohydrolase 1 (205 aa).

Zn(2+) contacts are provided by Cys-94, His-97, and Cys-165.

This sequence belongs to the GTP cyclohydrolase I family. Homomer.

The catalysed reaction is GTP + H2O = 7,8-dihydroneopterin 3'-triphosphate + formate + H(+). It functions in the pathway cofactor biosynthesis; 7,8-dihydroneopterin triphosphate biosynthesis; 7,8-dihydroneopterin triphosphate from GTP: step 1/1. This Sinorhizobium fredii (strain NBRC 101917 / NGR234) protein is GTP cyclohydrolase 1.